Reading from the N-terminus, the 145-residue chain is Selenoprotein M (145 aa).

A signal peptide spans 1–23; the sequence is MSILLSPPSLLLLLAALVAPATS. Active-site nucleophile residues include cysteine 45 and selenocysteine 48. Residues 45 to 48 constitute a cross-link (cysteinyl-selenocysteine (Cys-Sec)); it reads CGGU. A non-standard amino acid (selenocysteine) is located at residue selenocysteine 48. A disordered region spans residues 125-145; it reads PPEYLWAPAKPPEEASEHDDL.

Belongs to the selenoprotein M/F family. As to expression, widely expressed. Highly expressed in brain.

The protein resides in the cytoplasm. The protein localises to the perinuclear region. It is found in the endoplasmic reticulum. It localises to the golgi apparatus. Its function is as follows. May function as a thiol-disulfide oxidoreductase that participates in disulfide bond formation. This Mus musculus (Mouse) protein is Selenoprotein M.